The sequence spans 86 residues: MSIQKSTDSSSLAEVIDRILDKGIVIDAFARVSLVGIEILTIEARVVIASVDTWLRYAEAVGLLTDKVEEEGLPGRTEERGAGLSF.

The protein belongs to the gas vesicle GvpA family. The gas vesicle shell is 2 nm thick and consists of a single layer of this protein. It forms helical ribs nearly perpendicular to the long axis of the vesicle.

It localises to the gas vesicle shell. Functionally, gas vesicles are hollow, gas filled proteinaceous nanostructures found in some microorganisms. During planktonic growth they allow positioning of the organism at a favorable depth for light or nutrient acquisition. GvpA forms the protein shell. It is not clear if the 2 type A proteins in this organism are functionally redundant. In terms of biological role, when the full gvp locus (gvpA1-gvpP-gvpQ-gvpA2-gvpR-gvpN-gvpF-gvpG-gvpL-gvpS-gvpK-gvpJ-gvpT-gvpU, called pNL26) is expressed in E.coli gas vesicles are made. This is Gas vesicle protein A1 from Priestia megaterium (Bacillus megaterium).